The following is a 255-amino-acid chain: MAVGKNKRLSKGKKGLKKRTQDPFSRKDEYSVKAPSTFAVRDVGKTLVNRTTGLKNANDSLKGRIFEVSLADLQNDEDHAFRKVKLRVDEVQGKNCLTNFHGLDFTSDKLRSLVRKWQTLIEANVTVKTTDDYLLRLFAIAFTKRRPNQIKKTTYARSSQIRAIRKKITEIIQREASTRTLAQLTKLIPEVIGREIDKSTHGIYPLQNVHIRKVKLLKSPKFDLGALLALHGESSTDDKGQKVEREFKEQVLESV.

The span at 1–18 (MAVGKNKRLSKGKKGLKK) shows a compositional bias: basic residues. Residues 1 to 28 (MAVGKNKRLSKGKKGLKKRTQDPFSRKD) form a disordered region. Position 2 is an N-acetylalanine; partial (Ala-2). The segment covering 19 to 28 (RTQDPFSRKD) has biased composition (basic and acidic residues).

Belongs to the eukaryotic ribosomal protein eS1 family. In terms of assembly, component of the small ribosomal subunit. Mature ribosomes consist of a small (40S) and a large (60S) subunit. The 40S subunit contains about 33 different proteins and 1 molecule of RNA (18S). The 60S subunit contains about 49 different proteins and 3 molecules of RNA (25S, 5.8S and 5S).

The protein resides in the cytoplasm. In Ajellomyces capsulatus (strain H143) (Darling's disease fungus), this protein is Small ribosomal subunit protein eS1.